The sequence spans 154 residues: Ribosome maturation factor RimP (154 aa).

Belongs to the RimP family.

It localises to the cytoplasm. Its function is as follows. Required for maturation of 30S ribosomal subunits. This Finegoldia magna (strain ATCC 29328 / DSM 20472 / WAL 2508) (Peptostreptococcus magnus) protein is Ribosome maturation factor RimP.